Reading from the N-terminus, the 217-residue chain is Small ribosomal subunit protein uS3 (217 aa).

The region spanning 38–106 is the KH type-2 domain; sequence IRKYIEQRLA…RVHINIIEIK (69 aa).

Belongs to the universal ribosomal protein uS3 family. In terms of assembly, part of the 30S ribosomal subunit. Forms a tight complex with proteins S10 and S14.

In terms of biological role, binds the lower part of the 30S subunit head. Binds mRNA in the 70S ribosome, positioning it for translation. In Lactiplantibacillus plantarum (strain ATCC BAA-793 / NCIMB 8826 / WCFS1) (Lactobacillus plantarum), this protein is Small ribosomal subunit protein uS3.